The primary structure comprises 155 residues: U4/U6.U5 small nuclear ribonucleoprotein 27 kDa protein (155 aa).

2 stretches are compositionally biased toward basic residues: residues 1–31 (MGRSRSRSPRRERRRSRSTSRERERRRRERS) and 39–59 (RRSRSRSPHRRRSRSPRRHRS). Positions 1–97 (MGRSRSRSPR…ITEEDLEGKT (97 aa)) are disordered. A phosphoserine mark is found at Ser61 and Ser65. Positions 66 to 97 (RLKERRDEEKKETKETKSKERQITEEDLEGKT) are enriched in basic and acidic residues. Phosphoserine occurs at positions 111, 114, and 132.

The protein belongs to the SNUT3 family. As to quaternary structure, part of a tri-snRNP complex. Phosphorylated in vitro by snRNP-associated protein kinase.

It is found in the nucleus. In terms of biological role, may play a role in mRNA splicing. The sequence is that of U4/U6.U5 small nuclear ribonucleoprotein 27 kDa protein (SNRNP27) from Homo sapiens (Human).